We begin with the raw amino-acid sequence, 159 residues long: Ribosomal RNA large subunit methyltransferase H (159 aa).

Residues L76, G108, and 127–132 (FSKMTL) each bind S-adenosyl-L-methionine.

This sequence belongs to the RNA methyltransferase RlmH family. Homodimer.

It is found in the cytoplasm. It carries out the reaction pseudouridine(1915) in 23S rRNA + S-adenosyl-L-methionine = N(3)-methylpseudouridine(1915) in 23S rRNA + S-adenosyl-L-homocysteine + H(+). In terms of biological role, specifically methylates the pseudouridine at position 1915 (m3Psi1915) in 23S rRNA. The protein is Ribosomal RNA large subunit methyltransferase H of Bacillus cereus (strain ATCC 10987 / NRS 248).